A 667-amino-acid polypeptide reads, in one-letter code: Transmembrane 9 superfamily member 1 (667 aa).

The N-terminal stretch at 1 to 22 (MIYKMAHVQLLLLYFFVSTVKA) is a signal peptide. At 23-302 (FYLPGVAPTT…DKYLHVYDPS (280 aa)) the chain is on the lumenal side. N-linked (GlcNAc...) asparagine glycans are attached at residues N61 and N282. Residues 303-323 (IQWFSLINFSLVVVLLSSVVI) form a helical membrane-spanning segment. Residues 324 to 370 (HSLLRALKSDFARYNELNLDDDFQEDSGWKLNHGDVFRSPSQSLTLS) are Cytoplasmic-facing. Residues 371-391 (ILVGSGVQLFLMVTCSIFFAA) form a helical membrane-spanning segment. The Lumenal segment spans residues 392-405 (LGFLSPSSRGSLAT). Residues 406 to 426 (VMFILYALFGFVGSYTSMGIY) form a helical membrane-spanning segment. At 427-442 (KFFNGPYWKANLILTP) the chain is on the cytoplasmic side. Residues 443–463 (LLVPGAILLIIIALNFFLMFV) form a helical membrane-spanning segment. Residues 464–474 (HSSGVIPASTL) lie on the Lumenal side of the membrane. Residues 475 to 495 (FFMVFLWFLFSIPLSFAGSLI) form a helical membrane-spanning segment. Residues 496–527 (ARKRCHWDEHPTKTNQIARQIPFQPWYLKTIP) lie on the Cytoplasmic side of the membrane. Residues 528-548 (ATLIAGIFPFGSIAVELYFIY) traverse the membrane as a helical segment. The Lumenal segment spans residues 549–560 (TSLWFNKIFYMF). Residues 561–581 (GFLFFSFLLLTLTSSLVTILI) traverse the membrane as a helical segment. Residues 582-596 (TYHSLCLENWKWQWR) are Cytoplasmic-facing. A helical membrane pass occupies residues 597–617 (GFIIGGAGCALYVFIHSILFT). At 618–635 (KFKLGGFTTIVLYVGYSS) the chain is on the lumenal side. The helical transmembrane segment at 636–656 (VISLLCCLVTGSIGFISSMLF) threads the bilayer. Residues 657–667 (VRKIYSSIKVD) are Cytoplasmic-facing.

The protein belongs to the nonaspanin (TM9SF) (TC 9.A.2) family.

The protein localises to the endosome membrane. It localises to the vacuole membrane. In terms of biological role, with TMN2 and TMN3, plays a critical role in the late stages of a nutrient-controlled pathway notably regulating FLO11 gene expression. Acts downstream of RAS2 and TOR. Essential for cell adhesion and filamentous growth. May play a role as effector of cellular copper homeostasis. The polypeptide is Transmembrane 9 superfamily member 1 (EMP70) (Saccharomyces cerevisiae (strain ATCC 204508 / S288c) (Baker's yeast)).